Here is an 837-residue protein sequence, read N- to C-terminus: Protein translocase subunit SecA 1 (837 aa).

ATP-binding positions include Q85, G103–T107, and D492. The disordered stretch occupies residues K791–A837. The span at G800–R817 shows a compositional bias: basic and acidic residues. Positions 821, 823, 832, and 833 each coordinate Zn(2+). Positions K827–A837 are enriched in basic residues.

Belongs to the SecA family. In terms of assembly, monomer and homodimer. Part of the essential Sec protein translocation apparatus which comprises SecA, SecYEG and auxiliary proteins SecDF. Other proteins may also be involved. It depends on Zn(2+) as a cofactor.

The protein localises to the cell membrane. Its subcellular location is the cytoplasm. It catalyses the reaction ATP + H2O + cellular proteinSide 1 = ADP + phosphate + cellular proteinSide 2.. In terms of biological role, part of the Sec protein translocase complex. Interacts with the SecYEG preprotein conducting channel. Has a central role in coupling the hydrolysis of ATP to the transfer of proteins into and across the cell membrane, serving as an ATP-driven molecular motor driving the stepwise translocation of polypeptide chains across the membrane. The chain is Protein translocase subunit SecA 1 from Listeria monocytogenes serovar 1/2a (strain ATCC BAA-679 / EGD-e).